A 115-amino-acid polypeptide reads, in one-letter code: NADH-ubiquinone oxidoreductase chain 3 (115 aa).

Transmembrane regions (helical) follow at residues 5 to 25 (LTLM…FWLP), 55 to 75 (FFLV…LLPL), and 86 to 106 (LMLT…AYEW).

This sequence belongs to the complex I subunit 3 family. In terms of assembly, core subunit of respiratory chain NADH dehydrogenase (Complex I) which is composed of 45 different subunits. Interacts with TMEM186. Interacts with TMEM242.

The protein resides in the mitochondrion inner membrane. It catalyses the reaction a ubiquinone + NADH + 5 H(+)(in) = a ubiquinol + NAD(+) + 4 H(+)(out). Core subunit of the mitochondrial membrane respiratory chain NADH dehydrogenase (Complex I) which catalyzes electron transfer from NADH through the respiratory chain, using ubiquinone as an electron acceptor. Essential for the catalytic activity of complex I. The chain is NADH-ubiquinone oxidoreductase chain 3 from Avahi cleesei (Cleese's woolly lemur).